A 215-amino-acid chain; its full sequence is Protein FAM167A (215 aa).

Disordered stretches follow at residues 1-26 (MSVPQIQVEEVSEKDRPAGAAVPPDD) and 63-109 (RPAA…LTTG). Residues 124–157 (LRKELAEMRLQDQQLARQLMRLRGDINKLKIEQT) are a coiled coil.

It belongs to the FAM167 (SEC) family.

The polypeptide is Protein FAM167A (Fam167a) (Mus musculus (Mouse)).